A 265-amino-acid polypeptide reads, in one-letter code: Type III pantothenate kinase (265 aa).

Position 6–13 (6–13) interacts with ATP; sequence DVGNTHTV. 112 to 115 provides a ligand contact to substrate; it reads GADR. The Proton acceptor role is filled by Asp-114. Residue Asp-134 coordinates K(+). Thr-137 contacts ATP. Residue Thr-189 participates in substrate binding.

Belongs to the type III pantothenate kinase family. In terms of assembly, homodimer. NH4(+) serves as cofactor. K(+) is required as a cofactor.

The protein localises to the cytoplasm. It catalyses the reaction (R)-pantothenate + ATP = (R)-4'-phosphopantothenate + ADP + H(+). It participates in cofactor biosynthesis; coenzyme A biosynthesis; CoA from (R)-pantothenate: step 1/5. Its function is as follows. Catalyzes the phosphorylation of pantothenate (Pan), the first step in CoA biosynthesis. The sequence is that of Type III pantothenate kinase from Streptomyces griseus subsp. griseus (strain JCM 4626 / CBS 651.72 / NBRC 13350 / KCC S-0626 / ISP 5235).